Reading from the N-terminus, the 419-residue chain is Enolase (419 aa).

Gln161 contacts (2R)-2-phosphoglycerate. The active-site Proton donor is the Glu205. Positions 240, 283, and 309 each coordinate Mg(2+). Positions 334, 363, 364, and 385 each coordinate (2R)-2-phosphoglycerate. Lys334 (proton acceptor) is an active-site residue.

This sequence belongs to the enolase family. Requires Mg(2+) as cofactor.

It localises to the cytoplasm. The protein resides in the secreted. The protein localises to the cell surface. The catalysed reaction is (2R)-2-phosphoglycerate = phosphoenolpyruvate + H2O. It participates in carbohydrate degradation; glycolysis; pyruvate from D-glyceraldehyde 3-phosphate: step 4/5. Functionally, catalyzes the reversible conversion of 2-phosphoglycerate (2-PG) into phosphoenolpyruvate (PEP). It is essential for the degradation of carbohydrates via glycolysis. The sequence is that of Enolase from Saccharolobus islandicus (strain L.S.2.15 / Lassen #1) (Sulfolobus islandicus).